Reading from the N-terminus, the 198-residue chain is Recombination protein RecR (198 aa).

The C4-type zinc finger occupies 57 to 72; sequence CEKCNTFTEAQICEVC. In terms of domain architecture, Toprim spans 80–175; the sequence is TLLCVVETPA…AVTRLARGVP (96 aa).

The protein belongs to the RecR family.

Functionally, may play a role in DNA repair. It seems to be involved in an RecBC-independent recombinational process of DNA repair. It may act with RecF and RecO. The polypeptide is Recombination protein RecR (Paraburkholderia xenovorans (strain LB400)).